Reading from the N-terminus, the 412-residue chain is WW domain-containing oxidoreductase (412 aa).

The segment at 1 to 24 (MAALKYAGMEDTDSEDELPPGWEE) is disordered. Positions 16 to 49 (DELPPGWEERSTKDGWVYYANHEEMKTQWEHPKT) constitute a WW 1 domain. The short motif at 50-55 (GKKKRC) is the Nuclear localization signal element. Residues 57-90 (GALPYGWEQETDDKGQIFYVDHINKRKTYFDPRQ) form the WW 2 domain. 128 to 134 (GANSGIG) contributes to the NADP(+) binding site. Substrate is bound at residue Ser-257. Tyr-290 (proton acceptor) is an active-site residue.

It belongs to the short-chain dehydrogenases/reductases (SDR) family.

Its subcellular location is the cytoplasm. It is found in the mitochondrion. The protein resides in the golgi apparatus. It localises to the lysosome. Putative oxidoreductase. Acts as a tumor suppressor and plays a role in apoptosis. May function synergistically with p53/TP53 to control genotoxic stress-induced cell death. Plays a role in TGFB1 signaling and TGFB1-mediated cell death. May also play a role in tumor necrosis factor (TNF)-mediated cell death. Required for normal bone development. Inhibits Wnt signaling. This is WW domain-containing oxidoreductase (wwox) from Danio rerio (Zebrafish).